Reading from the N-terminus, the 122-residue chain is MVSFMTRLNVADNTGAKQVGIIKVLGATYKRYAFLGDVVVVSVKDAIPNGMVKKGQVLRAVIVRTKKGQQRQDGTHLKFHDNACVLIKEDKSPRGTRIFGPVARELREKGYNKILSLAVEVV.

This sequence belongs to the universal ribosomal protein uL14 family. Part of the 50S ribosomal subunit. Forms a cluster with proteins L3 and L19. In the 70S ribosome, L14 and L19 interact and together make contacts with the 16S rRNA in bridges B5 and B8.

In terms of biological role, binds to 23S rRNA. Forms part of two intersubunit bridges in the 70S ribosome. This chain is Large ribosomal subunit protein uL14, found in Mycoplasma genitalium (strain ATCC 33530 / DSM 19775 / NCTC 10195 / G37) (Mycoplasmoides genitalium).